The sequence spans 426 residues: Ornithine aminotransferase (426 aa).

K291 carries the post-translational modification N6-(pyridoxal phosphate)lysine.

Belongs to the class-III pyridoxal-phosphate-dependent aminotransferase family. Requires pyridoxal 5'-phosphate as cofactor.

It catalyses the reaction a 2-oxocarboxylate + L-ornithine = L-glutamate 5-semialdehyde + an L-alpha-amino acid. Its pathway is amino-acid biosynthesis; L-proline biosynthesis; L-glutamate 5-semialdehyde from L-ornithine: step 1/1. This is Ornithine aminotransferase from Vigna aconitifolia (Moth bean).